A 482-amino-acid polypeptide reads, in one-letter code: UDP-N-acetylmuramate--L-alanine ligase (482 aa).

129–135 (GTHGKTT) is an ATP binding site.

This sequence belongs to the MurCDEF family.

It localises to the cytoplasm. The enzyme catalyses UDP-N-acetyl-alpha-D-muramate + L-alanine + ATP = UDP-N-acetyl-alpha-D-muramoyl-L-alanine + ADP + phosphate + H(+). It functions in the pathway cell wall biogenesis; peptidoglycan biosynthesis. Cell wall formation. The sequence is that of UDP-N-acetylmuramate--L-alanine ligase from Acinetobacter baumannii (strain AB307-0294).